A 358-amino-acid polypeptide reads, in one-letter code: Uroporphyrinogen decarboxylase (358 aa).

Residues 28–32 (RQAGR), Asp-78, Tyr-154, Ser-208, and His-324 each bind substrate.

It belongs to the uroporphyrinogen decarboxylase family. As to quaternary structure, homodimer.

It is found in the cytoplasm. The enzyme catalyses uroporphyrinogen III + 4 H(+) = coproporphyrinogen III + 4 CO2. Its pathway is porphyrin-containing compound metabolism; protoporphyrin-IX biosynthesis; coproporphyrinogen-III from 5-aminolevulinate: step 4/4. Its function is as follows. Catalyzes the decarboxylation of four acetate groups of uroporphyrinogen-III to yield coproporphyrinogen-III. This Acidiphilium cryptum (strain JF-5) protein is Uroporphyrinogen decarboxylase.